The chain runs to 116 residues: MRHQCRVPQLGRPADQRKAMLRGLTTQLIREGRVTTTKARAKALRDETERMISLAKDGSLAARRRALGYIYDKQLVHALFDKASERYGDRNGGYTRIIRTVPRRGDNAEMAIIELV.

It belongs to the bacterial ribosomal protein bL17 family. In terms of assembly, part of the 50S ribosomal subunit. Contacts protein L32.

In Synechococcus sp. (strain RCC307), this protein is Large ribosomal subunit protein bL17.